Consider the following 496-residue polypeptide: Glycerol kinase (496 aa).

An ADP-binding site is contributed by Thr12. ATP-binding residues include Thr12, Thr13, and Ser14. Residue Thr12 participates in sn-glycerol 3-phosphate binding. Arg16 serves as a coordination point for ADP. The sn-glycerol 3-phosphate site is built by Arg82, Glu83, and Tyr134. Glycerol-binding residues include Arg82, Glu83, and Tyr134. His230 is subject to Phosphohistidine; by HPr. Asp244 contributes to the sn-glycerol 3-phosphate binding site. Residues Asp244 and Gln245 each contribute to the glycerol site. ADP is bound by residues Thr266 and Gly309. Residues Thr266, Gly309, Gln313, and Gly410 each contribute to the ATP site. Positions 410 and 414 each coordinate ADP.

This sequence belongs to the FGGY kinase family. In terms of assembly, homotetramer and homodimer (in equilibrium). In terms of processing, the phosphoenolpyruvate-dependent sugar phosphotransferase system (PTS), including enzyme I, and histidine-containing protein (HPr) are required for the phosphorylation, which leads to the activation of the enzyme.

It carries out the reaction glycerol + ATP = sn-glycerol 3-phosphate + ADP + H(+). Its pathway is polyol metabolism; glycerol degradation via glycerol kinase pathway; sn-glycerol 3-phosphate from glycerol: step 1/1. Its activity is regulated as follows. Activated by phosphorylation and inhibited by fructose 1,6-bisphosphate (FBP). Its function is as follows. Key enzyme in the regulation of glycerol uptake and metabolism. Catalyzes the phosphorylation of glycerol to yield sn-glycerol 3-phosphate. The sequence is that of Glycerol kinase from Bacillus velezensis (strain DSM 23117 / BGSC 10A6 / LMG 26770 / FZB42) (Bacillus amyloliquefaciens subsp. plantarum).